The sequence spans 673 residues: Metal-nicotianamine transporter YSL1 (673 aa).

Positions M1–G13 are enriched in basic and acidic residues. The disordered stretch occupies residues M1–T39. Residues E14–E34 show a composition bias toward acidic residues. 16 helical membrane-spanning segments follow: residues Q46–A66, L71–V91, S119–L139, G163–I183, F225–I245, A260–C280, L283–L303, V328–F348, F392–F412, V420–L440, D442–G462, V467–L487, I510–F530, F558–L578, F604–W624, and G642–V662.

The protein belongs to the YSL (TC 2.A.67.2) family. In terms of tissue distribution, low levels of expression in leaves and shoots, but not detected in roots. Restricted to the vasculature, in the xylem parenchyma surrounding xylem tubes. Expressed in pollen grains, in the vasculature of petals and sepals, in the carpel veins, in the style underneath the stigmatic papillae, in the vascular tissue of the funiculus and in the chalazal endosperm.

It is found in the membrane. Its function is as follows. Involved in iron loading of the seeds. Acts probably as a transporter of iron- and metal-nicotianamine chelates. The protein is Metal-nicotianamine transporter YSL1 (YSL1) of Arabidopsis thaliana (Mouse-ear cress).